Here is a 139-residue protein sequence, read N- to C-terminus: Putative nickel-responsive regulator (139 aa).

Residues histidine 77, histidine 88, histidine 90, and cysteine 96 each coordinate Ni(2+).

This sequence belongs to the transcriptional regulatory CopG/NikR family. Ni(2+) serves as cofactor.

Functionally, transcriptional regulator. This chain is Putative nickel-responsive regulator, found in Haloarcula marismortui (strain ATCC 43049 / DSM 3752 / JCM 8966 / VKM B-1809) (Halobacterium marismortui).